Reading from the N-terminus, the 482-residue chain is Replication factor C large subunit (482 aa).

An ATP-binding site is contributed by 46–53; that stretch reads GPPGSGKT. Positions 420–482 are disordered; it reads EKETPKKKKK…KKQATLDSFF (63 aa). Positions 442-476 are enriched in basic and acidic residues; the sequence is KISEPPKEPLKEVIEETVEKTDKKEKEKKDPKKQA.

The protein belongs to the activator 1 small subunits family. RfcL subfamily. As to quaternary structure, heteromultimer composed of small subunits (RfcS) and large subunits (RfcL).

Its function is as follows. Part of the RFC clamp loader complex which loads the PCNA sliding clamp onto DNA. The chain is Replication factor C large subunit from Methanococcus maripaludis (strain C7 / ATCC BAA-1331).